Consider the following 428-residue polypeptide: Flotillin-2 (428 aa).

S-palmitoyl cysteine attachment occurs at residues C4, C19, and C20.

It belongs to the band 7/mec-2 family. Flotillin subfamily. In terms of assembly, heterooligomeric complex of flotillins 1 and 2. Post-translationally, palmitoylation may be required for the formation of higher order complexes and for neurite outgrowth in cultured neural stem cells. In terms of tissue distribution, normally expressed in growing retinal exons of newly differentiated ganglion cells at the retinal margin. After optic nerve injury, expressed in all retinal ganglion cells and retinal axons. Also expressed in endothelial cells, spinal cord, larval and adult skin, muscle processes, thymus and gill macrophages.

The protein localises to the membrane. It is found in the endosome. Functionally, may play a role in axon growth and regeneration. May be involved in epidermal cell adhesion and epidermal structure and function. The polypeptide is Flotillin-2 (flot2) (Carassius auratus (Goldfish)).